We begin with the raw amino-acid sequence, 574 residues long: Intraflagellar transport protein 56 homolog (574 aa).

3 TPR repeats span residues Ala-20–Asp-52, Asp-57–Pro-90, and Leu-151–Leu-184.

Belongs to the IFT56 family. Component of the IFT complex B composed of at least che-2, che-13, dyf-1, dyf-3, dyf-6, dyf-11, dyf-13, ift-20, ift-74, ift-81, ifta-2, osm-1, osm-5 and osm-6.

The protein localises to the cell projection. It is found in the cilium. In terms of biological role, component of the intraflagellar transport (IFT) complex B required for transport of proteins in the motile cilium. May be required for ciliary entrance and transport of specific ciliary cargo proteins such as che-3 which are related to motility. This Caenorhabditis elegans protein is Intraflagellar transport protein 56 homolog.